We begin with the raw amino-acid sequence, 164 residues long: Phosphopantetheine adenylyltransferase (164 aa).

Residue serine 9 coordinates substrate. Residues 9 to 10 (SF) and histidine 17 each bind ATP. Substrate contacts are provided by lysine 41, leucine 73, and lysine 87. ATP contacts are provided by residues 88 to 90 (GLR), glutamate 98, and 123 to 129 (YSYISSS).

Belongs to the bacterial CoaD family. In terms of assembly, homohexamer. Mg(2+) is required as a cofactor.

Its subcellular location is the cytoplasm. It catalyses the reaction (R)-4'-phosphopantetheine + ATP + H(+) = 3'-dephospho-CoA + diphosphate. It participates in cofactor biosynthesis; coenzyme A biosynthesis; CoA from (R)-pantothenate: step 4/5. Functionally, reversibly transfers an adenylyl group from ATP to 4'-phosphopantetheine, yielding dephospho-CoA (dPCoA) and pyrophosphate. The sequence is that of Phosphopantetheine adenylyltransferase from Clostridium perfringens (strain SM101 / Type A).